The following is a 210-amino-acid chain: MLTAAGDDELDPVVGPESATEAATPRVLTIISHVMEKLVARNEWLAKQTKGFGKSLEAFHGVRAPSISIAKYLERIYKYTKCSPACFVVGYVYIDRLAHKHPGSLVVSLNVHRLLVTCVMIAAKILDDVHYNNEFYARVGGVSNADLNKMELELLFLLDFRVTVSFRVFESYCFHLEKEMQLNDAVSSLKDIQPMQESLSPASTLSSLYV.

Belongs to the cyclin family. Cyclin U/P subfamily. In terms of assembly, interacts with CDKA-1. In terms of tissue distribution, expressed in roots and flowers. Expressed in the shoot apex, leaf primordia and young leaves.

The chain is Cyclin-U1-1 (CYCU1-1) from Arabidopsis thaliana (Mouse-ear cress).